The primary structure comprises 359 residues: Ribosomal RNA large subunit methyltransferase M (359 aa).

S-adenosyl-L-methionine contacts are provided by residues Ser-186, Cys-219 to Gly-222, Asp-238, Asp-258, and Asp-275. Catalysis depends on Lys-304, which acts as the Proton acceptor.

Belongs to the class I-like SAM-binding methyltransferase superfamily. RNA methyltransferase RlmE family. RlmM subfamily. As to quaternary structure, monomer.

The protein resides in the cytoplasm. It catalyses the reaction cytidine(2498) in 23S rRNA + S-adenosyl-L-methionine = 2'-O-methylcytidine(2498) in 23S rRNA + S-adenosyl-L-homocysteine + H(+). Catalyzes the 2'-O-methylation at nucleotide C2498 in 23S rRNA. This is Ribosomal RNA large subunit methyltransferase M from Aliivibrio fischeri (strain MJ11) (Vibrio fischeri).